The following is a 249-amino-acid chain: Metallo-beta-lactamase type 2 (249 aa).

The first 22 residues, 1–22 (MMKKMKWALVLALGLTGLNAFG), serve as a signal peptide directing secretion. Zn(2+) contacts are provided by His-98, His-100, Asp-102, His-161, and Cys-180. Residue Lys-183 participates in substrate binding. Position 222 (His-222) interacts with Zn(2+).

Belongs to the metallo-beta-lactamase superfamily. Class-B beta-lactamase family. In terms of assembly, monomer. The cofactor is Zn(2+).

The protein resides in the periplasm. It carries out the reaction a beta-lactam + H2O = a substituted beta-amino acid. Confers resistance to the different beta-lactams antibiotics (penicillin, cephalosporin and carbapenem) via the hydrolysis of the beta-lactam ring. This chain is Metallo-beta-lactamase type 2 (blaB4), found in Elizabethkingia meningoseptica (Chryseobacterium meningosepticum).